The primary structure comprises 133 residues: Profilin (133 aa).

Belongs to the profilin family.

In terms of biological role, more likely to influence phosphoinositide metabolism than actin assembly. The protein is Profilin of Vaccinia virus (strain Tian Tan) (VACV).